A 338-amino-acid polypeptide reads, in one-letter code: Ketol-acid reductoisomerase (NADP(+)) (338 aa).

In terms of domain architecture, KARI N-terminal Rossmann spans 3-183; the sequence is IELLYDADAD…GGARAGVIPT (181 aa). NADP(+)-binding positions include 26 to 29, Arg-49, Ser-52, Ser-54, and 84 to 87; these read YGSQ and DTSQ. His-109 is a catalytic residue. Position 135 (Gly-135) interacts with NADP(+). The 146-residue stretch at 184–329 folds into the KARI C-terminal knotted domain; sequence TFEAETVTDL…AKLRDLMSWV (146 aa). Mg(2+) contacts are provided by Asp-192, Glu-196, Glu-228, and Glu-232. Ser-253 contributes to the substrate binding site.

The protein belongs to the ketol-acid reductoisomerase family. Mg(2+) serves as cofactor.

The catalysed reaction is (2R)-2,3-dihydroxy-3-methylbutanoate + NADP(+) = (2S)-2-acetolactate + NADPH + H(+). It catalyses the reaction (2R,3R)-2,3-dihydroxy-3-methylpentanoate + NADP(+) = (S)-2-ethyl-2-hydroxy-3-oxobutanoate + NADPH + H(+). Its pathway is amino-acid biosynthesis; L-isoleucine biosynthesis; L-isoleucine from 2-oxobutanoate: step 2/4. The protein operates within amino-acid biosynthesis; L-valine biosynthesis; L-valine from pyruvate: step 2/4. Involved in the biosynthesis of branched-chain amino acids (BCAA). Catalyzes an alkyl-migration followed by a ketol-acid reduction of (S)-2-acetolactate (S2AL) to yield (R)-2,3-dihydroxy-isovalerate. In the isomerase reaction, S2AL is rearranged via a Mg-dependent methyl migration to produce 3-hydroxy-3-methyl-2-ketobutyrate (HMKB). In the reductase reaction, this 2-ketoacid undergoes a metal-dependent reduction by NADPH to yield (R)-2,3-dihydroxy-isovalerate. In Corynebacterium glutamicum (strain ATCC 13032 / DSM 20300 / JCM 1318 / BCRC 11384 / CCUG 27702 / LMG 3730 / NBRC 12168 / NCIMB 10025 / NRRL B-2784 / 534), this protein is Ketol-acid reductoisomerase (NADP(+)).